Consider the following 226-residue polypeptide: Histone H2B.v1 (226 aa).

Residues 100 to 130 (FNSAKQYPPQPPPAKTATPSSPSSIPAPPIS) are disordered. Residues 114–123 (KTATPSSPSS) are compositionally biased toward low complexity.

It belongs to the histone H2B family.

This chain is Histone H2B.v1 (H2Bv1), found in Dictyostelium discoideum (Social amoeba).